Consider the following 1357-residue polypeptide: DNA-directed RNA polymerase subunit beta (1357 aa).

This sequence belongs to the RNA polymerase beta chain family. The RNAP catalytic core consists of 2 alpha, 1 beta, 1 beta' and 1 omega subunit. When a sigma factor is associated with the core the holoenzyme is formed, which can initiate transcription.

It carries out the reaction RNA(n) + a ribonucleoside 5'-triphosphate = RNA(n+1) + diphosphate. Its function is as follows. DNA-dependent RNA polymerase catalyzes the transcription of DNA into RNA using the four ribonucleoside triphosphates as substrates. This is DNA-directed RNA polymerase subunit beta from Pseudomonas syringae pv. syringae (strain B728a).